Consider the following 87-residue polypeptide: Probable Fe(2+)-trafficking protein (87 aa).

This sequence belongs to the Fe(2+)-trafficking protein family.

Its function is as follows. Could be a mediator in iron transactions between iron acquisition and iron-requiring processes, such as synthesis and/or repair of Fe-S clusters in biosynthetic enzymes. This Francisella philomiragia subsp. philomiragia (strain ATCC 25017 / CCUG 19701 / FSC 153 / O#319-036) protein is Probable Fe(2+)-trafficking protein.